We begin with the raw amino-acid sequence, 420 residues long: D-tagatose-1,6-bisphosphate aldolase subunit GatZ (420 aa).

The protein belongs to the GatZ/KbaZ family. GatZ subfamily. Forms a complex with GatY.

The protein operates within carbohydrate metabolism; D-tagatose 6-phosphate degradation; D-glyceraldehyde 3-phosphate and glycerone phosphate from D-tagatose 6-phosphate: step 2/2. Functionally, component of the tagatose-1,6-bisphosphate aldolase GatYZ that is required for full activity and stability of the Y subunit. Could have a chaperone-like function for the proper and stable folding of GatY. When expressed alone, GatZ does not show any aldolase activity. Is involved in the catabolism of galactitol. This chain is D-tagatose-1,6-bisphosphate aldolase subunit GatZ, found in Escherichia coli O6:K15:H31 (strain 536 / UPEC).